The following is a 211-amino-acid chain: Pyridoxine/pyridoxamine 5'-phosphate oxidase (211 aa).

Residues 8–11 and lysine 66 each bind substrate; that span reads RKNY. FMN contacts are provided by residues 61-66, 76-77, lysine 83, and glutamine 105; these read RIVLLK and FT. The substrate site is built by tyrosine 123, arginine 127, and serine 131. FMN contacts are provided by residues 140-141 and tryptophan 184; that span reads QS. Residue 190-192 coordinates substrate; sequence RLH. Arginine 194 is a binding site for FMN.

It belongs to the pyridoxamine 5'-phosphate oxidase family. As to quaternary structure, homodimer. It depends on FMN as a cofactor.

It catalyses the reaction pyridoxamine 5'-phosphate + O2 + H2O = pyridoxal 5'-phosphate + H2O2 + NH4(+). The catalysed reaction is pyridoxine 5'-phosphate + O2 = pyridoxal 5'-phosphate + H2O2. The protein operates within cofactor metabolism; pyridoxal 5'-phosphate salvage; pyridoxal 5'-phosphate from pyridoxamine 5'-phosphate: step 1/1. It functions in the pathway cofactor metabolism; pyridoxal 5'-phosphate salvage; pyridoxal 5'-phosphate from pyridoxine 5'-phosphate: step 1/1. Catalyzes the oxidation of either pyridoxine 5'-phosphate (PNP) or pyridoxamine 5'-phosphate (PMP) into pyridoxal 5'-phosphate (PLP). The polypeptide is Pyridoxine/pyridoxamine 5'-phosphate oxidase (Polynucleobacter asymbioticus (strain DSM 18221 / CIP 109841 / QLW-P1DMWA-1) (Polynucleobacter necessarius subsp. asymbioticus)).